A 270-amino-acid polypeptide reads, in one-letter code: Putative phosphoenolpyruvate synthase regulatory protein (270 aa).

An ADP-binding site is contributed by 150-157; that stretch reads GVSRCGKT.

This sequence belongs to the pyruvate, phosphate/water dikinase regulatory protein family. PSRP subfamily.

The enzyme catalyses [pyruvate, water dikinase] + ADP = [pyruvate, water dikinase]-phosphate + AMP + H(+). The catalysed reaction is [pyruvate, water dikinase]-phosphate + phosphate + H(+) = [pyruvate, water dikinase] + diphosphate. Bifunctional serine/threonine kinase and phosphorylase involved in the regulation of the phosphoenolpyruvate synthase (PEPS) by catalyzing its phosphorylation/dephosphorylation. The protein is Putative phosphoenolpyruvate synthase regulatory protein of Shewanella piezotolerans (strain WP3 / JCM 13877).